We begin with the raw amino-acid sequence, 187 residues long: GTP cyclohydrolase 1 (187 aa).

Residues Cys74, His77, and Cys145 each contribute to the Zn(2+) site.

The protein belongs to the GTP cyclohydrolase I family. Homomer.

The catalysed reaction is GTP + H2O = 7,8-dihydroneopterin 3'-triphosphate + formate + H(+). Its pathway is cofactor biosynthesis; 7,8-dihydroneopterin triphosphate biosynthesis; 7,8-dihydroneopterin triphosphate from GTP: step 1/1. The sequence is that of GTP cyclohydrolase 1 from Sulfurihydrogenibium sp. (strain YO3AOP1).